The sequence spans 166 residues: Interferon gamma (166 aa).

The N-terminal stretch at 1-23 (MKYTSSFLALLLCVLLGFSGSYG) is a signal peptide. The residue at position 24 (Gln24) is a Pyrrolidone carboxylic acid. 2 N-linked (GlcNAc...) asparagine glycosylation sites follow: Asn39 and Asn106.

It belongs to the type II (or gamma) interferon family. Homodimer. Interacts with IFNGR1 (via extracellular domain); this interaction promotes IFNGR1 dimerization. As to expression, released primarily from activated T lymphocytes.

Its subcellular location is the secreted. Type II interferon produced by immune cells such as T-cells and NK cells that plays crucial roles in antimicrobial, antiviral, and antitumor responses by activating effector immune cells and enhancing antigen presentation. Primarily signals through the JAK-STAT pathway after interaction with its receptor IFNGR1 to affect gene regulation. Upon IFNG binding, IFNGR1 intracellular domain opens out to allow association of downstream signaling components JAK2, JAK1 and STAT1, leading to STAT1 activation, nuclear translocation and transcription of IFNG-regulated genes. Many of the induced genes are transcription factors such as IRF1 that are able to further drive regulation of a next wave of transcription. Plays a role in class I antigen presentation pathway by inducing a replacement of catalytic proteasome subunits with immunoproteasome subunits. In turn, increases the quantity, quality, and repertoire of peptides for class I MHC loading. Increases the efficiency of peptide generation also by inducing the expression of activator PA28 that associates with the proteasome and alters its proteolytic cleavage preference. Up-regulates as well MHC II complexes on the cell surface by promoting expression of several key molecules such as cathepsins B/CTSB, H/CTSH, and L/CTSL. Participates in the regulation of hematopoietic stem cells during development and under homeostatic conditions by affecting their development, quiescence, and differentiation. This chain is Interferon gamma (IFNG), found in Ovis aries (Sheep).